Consider the following 543-residue polypeptide: MKFLTTGLLATAALAAAQEQQVLQAEDGMGQAPQRGSSIFDETLQKFQSSLEDGISHFWSEMKTNFKDYLPLISLPKKHTRRPDSEWDHVVRGADIESVWVQGADGEKRREIDGKLHNYDLRVKAVDPSKLGVDAGVKQYSGYLDDNDADKHLFYWFFESRNDPKNDPVVLWLNGGPGCSSLTGLFLELGPATIDKNLKVVSNPYSWNSNASVIFLDQPVNVGFSYSGSSVSDTVAAGKDIYALLTLFFKQFPEYATQDFHISGESYAGHYIPVFAAEILSHKNTNINLKSALIGNGLTDPLTQYPQYRPMACGEGGYPAVLDQGTCRSMDNSLERCLSLIETCYSSESAWICVPAAMYCNSAILAPYQQTGMNPYDVRNKCEDMASLCYPQLNVITEWLNQKSVMQALGVEVESYESCNSGINRDFLFHGDWMKPYHRLVPSVLEKIPVLIYAGDADFICNWLGNQAWTDALEWPGHKKFAEAKLEDLKIVDNKNKGKKIGQVKSSGNFTFMRIFGAGHMVPLNQPEASLEFLNRWLRGEWH.

Residues 1-17 (MKFLTTGLLATAALAAA) form the signal peptide. A propeptide spanning residues 18–124 (QEQQVLQAED…KLHNYDLRVK (107 aa)) is cleaved from the precursor. 5 cysteine pairs are disulfide-bonded: C179/C419, C313/C327, C337/C360, C344/C353, and C382/C389. A glycan (N-linked (GlcNAc...) asparagine) is linked at N210. S266 is an active-site residue. D458 is an active-site residue. N-linked (GlcNAc...) asparagine glycosylation occurs at N509. The active site involves H520.

Belongs to the peptidase S10 family.

It is found in the vacuole. It catalyses the reaction Release of a C-terminal amino acid with broad specificity.. In terms of biological role, vacuolar carboxypeptidase involved in degradation of small peptides. Digests preferentially peptides containing an aliphatic or hydrophobic residue in P1' position, as well as methionine, leucine or phenylalanine in P1 position of ester substrate. The sequence is that of Carboxypeptidase Y homolog A (CPYA) from Trichophyton tonsurans (Scalp ringworm fungus).